The chain runs to 554 residues: Phosphomethylpyrimidine synthase (554 aa).

Residues Asn-188, Met-217, Tyr-246, His-282, 302-304, 343-346, and Glu-382 each bind substrate; these read SRG and DGLR. His-386 contributes to the Zn(2+) binding site. Tyr-409 contributes to the substrate binding site. His-450 lines the Zn(2+) pocket. [4Fe-4S] cluster-binding residues include Cys-530, Cys-533, and Cys-538.

Belongs to the ThiC family. Homodimer. [4Fe-4S] cluster is required as a cofactor.

The catalysed reaction is 5-amino-1-(5-phospho-beta-D-ribosyl)imidazole + S-adenosyl-L-methionine = 4-amino-2-methyl-5-(phosphooxymethyl)pyrimidine + CO + 5'-deoxyadenosine + formate + L-methionine + 3 H(+). The protein operates within cofactor biosynthesis; thiamine diphosphate biosynthesis. Its function is as follows. Catalyzes the synthesis of the hydroxymethylpyrimidine phosphate (HMP-P) moiety of thiamine from aminoimidazole ribotide (AIR) in a radical S-adenosyl-L-methionine (SAM)-dependent reaction. This chain is Phosphomethylpyrimidine synthase, found in Coxiella burnetii (strain CbuK_Q154) (Coxiella burnetii (strain Q154)).